The primary structure comprises 441 residues: Transcriptional regulatory protein ZraR (441 aa).

In terms of domain architecture, Response regulatory spans 7–121 (DILVVDDDIS…NLQATLEKAL (115 aa)). At Asp-56 the chain carries 4-aspartylphosphate. A Sigma-54 factor interaction domain is found at 141 to 370 (MVGKSPAMQH…LENAVERAVV (230 aa)). The ATP site is built by Gly-172, Thr-173, Arg-329, and Arg-359. A DNA-binding region (H-T-H motif) is located at residues 421–440 (KTEAARQLGITRKTLLAKLS).

In terms of processing, phosphorylated by ZraS.

The protein resides in the cytoplasm. Activity of the ZraS/ZraR two-component system is repressed by the zinc-bound form of ZraP, which probably interacts with the periplasmic region of ZraS. Its function is as follows. Part of the Zra signaling pathway, an envelope stress response (ESR) system composed of the periplasmic accessory protein ZraP, the histidine kinase ZraS and the transcriptional regulator ZraR. The ZraPSR system contributes to antibiotic resistance and is important for membrane integrity in the presence of membrane-targeting biocides. ZraR is a member of the two-component regulatory system ZraS/ZraR. When activated by ZraS, acts in conjunction with sigma-54 to regulate the expression of zraP in the presence of high Zn(2+) or Pb(2+) concentrations. Also positively autoregulates the expression of the zraSR operon. This is Transcriptional regulatory protein ZraR (zraR) from Escherichia coli O157:H7.